A 117-amino-acid chain; its full sequence is Bomanin Bicipital 1 (117 aa).

Residues 1-20 form the signal peptide; the sequence is MKCLILSFAIFVVLASQATA. 2 disulfide bridges follow: Cys29/Cys32 and Cys107/Cys110.

It belongs to the bomanin family. As to expression, hemolymph (at protein level).

The protein resides in the secreted. In terms of biological role, secreted immune-induced peptide induced by Toll signaling. Has a role in resistance to bacterial and fungal infections. The chain is Bomanin Bicipital 1 from Drosophila melanogaster (Fruit fly).